Here is a 267-residue protein sequence, read N- to C-terminus: Hydroxyethylthiazole kinase (267 aa).

Met-49 is a substrate binding site. Residues Arg-124 and Thr-170 each coordinate ATP. Gly-197 contacts substrate.

The protein belongs to the Thz kinase family. Mg(2+) serves as cofactor.

It catalyses the reaction 5-(2-hydroxyethyl)-4-methylthiazole + ATP = 4-methyl-5-(2-phosphooxyethyl)-thiazole + ADP + H(+). The protein operates within cofactor biosynthesis; thiamine diphosphate biosynthesis; 4-methyl-5-(2-phosphoethyl)-thiazole from 5-(2-hydroxyethyl)-4-methylthiazole: step 1/1. Catalyzes the phosphorylation of the hydroxyl group of 4-methyl-5-beta-hydroxyethylthiazole (THZ). The chain is Hydroxyethylthiazole kinase from Tolumonas auensis (strain DSM 9187 / NBRC 110442 / TA 4).